A 540-amino-acid polypeptide reads, in one-letter code: MTAKDVKFRDGARQQIVKGVNVLADAVKVTLGPKGRNVVIERGFGAPVITKDGVSVAKEIELKDRFENMGAQIVKQVASKTADVAGDGTTTATVLAQAIVQEGMKHVAAGMNPMDLKRGIDKAVGAVLDELRKLSRPISTHKEIAQVGAISANSDEAIGKIIADAMEKVGKDGVITVEDGKSLENELDVVEGMQFDRGYVSPYFINDPAKQAAYLDDALILLHDKKISSVRDLLPILEAASKAGKPLLIVAEDVEAEALATLVVNSMRGILKVAAVKAPGFGDRRKAMLEDLAILTGATVISEETGKQLDKATLEDLGSAKRVEVRKDDTIIIDGAGDAARIEARVKSIRVQIDEATSDYDREKLQERVAKLAGGVAVIKVGAVTEVEMKEKKDRVDDALHATRAAVEEGIVPGGGVALLRARAALSDIRGANADQDAGIRIVLRALEAPLRVIAANAGDEPSVVISKVLEGKGNFGYNAATGEYGDLVDAGVVDPTKVTRTALQNAASIASLVLTTDATVAQAPKEESAESAPAPELGY.

Residues 30 to 33 (TLGP), lysine 51, 87 to 91 (DGTTT), glycine 415, 479 to 481 (NAA), and aspartate 495 contribute to the ATP site.

Belongs to the chaperonin (HSP60) family. In terms of assembly, forms a cylinder of 14 subunits composed of two heptameric rings stacked back-to-back. Interacts with the co-chaperonin GroES.

Its subcellular location is the cytoplasm. It catalyses the reaction ATP + H2O + a folded polypeptide = ADP + phosphate + an unfolded polypeptide.. In terms of biological role, together with its co-chaperonin GroES, plays an essential role in assisting protein folding. The GroEL-GroES system forms a nano-cage that allows encapsulation of the non-native substrate proteins and provides a physical environment optimized to promote and accelerate protein folding. The sequence is that of Chaperonin GroEL 3 from Burkholderia cenocepacia (strain HI2424).